Consider the following 149-residue polypeptide: Envelope glycoprotein UL4 (149 aa).

The signal sequence occupies residues 1–18 (MMLRTWISLPMVLLDAYC). 9 N-linked (GlcNAc...) asparagine; by host glycosylation sites follow: N46, N51, N59, N67, N105, N109, N119, N136, and N145.

The protein belongs to the RL11 family. N-glycosylated and possibly O-glycosylated.

The protein localises to the virion membrane. The protein is Envelope glycoprotein UL4 (UL4) of Human cytomegalovirus (strain Merlin) (HHV-5).